A 627-amino-acid polypeptide reads, in one-letter code: Pentatricopeptide repeat-containing protein At2g15630, mitochondrial (627 aa).

The N-terminal 29 residues, 1–29 (MRRFTVPCILRHRISILSGAGYSPAAARL), are a transit peptide targeting the mitochondrion. 13 PPR repeats span residues 154–188 (STIL…GFYP), 189–223 (KTET…EIKS), 224–258 (NVYT…GIKP), 259–293 (TIVT…GFQP), 294–324 (DMQT…IGLV), 326–360 (DSVS…GMVP), 361–395 (TFYT…GIVL), 396–430 (DSVT…GIQP), 431–465 (TQFT…GMKP), 466–500 (DLVM…SINP), 501–535 (DDVT…GIKP), 536–570 (DHIS…GFNP), and 571–605 (TLLT…GIVP).

Belongs to the PPR family. P subfamily.

The protein resides in the mitochondrion. The sequence is that of Pentatricopeptide repeat-containing protein At2g15630, mitochondrial from Arabidopsis thaliana (Mouse-ear cress).